Reading from the N-terminus, the 309-residue chain is Protein FdhE (309 aa).

The protein belongs to the FdhE family.

Its subcellular location is the cytoplasm. In terms of biological role, necessary for formate dehydrogenase activity. This Escherichia coli (strain SMS-3-5 / SECEC) protein is Protein FdhE.